A 435-amino-acid polypeptide reads, in one-letter code: Trigger factor (435 aa).

Residues 163–248 (GELASVTFSA…VHAVKERKMP (86 aa)) form the PPIase FKBP-type domain.

The protein belongs to the FKBP-type PPIase family. Tig subfamily.

The protein resides in the cytoplasm. The enzyme catalyses [protein]-peptidylproline (omega=180) = [protein]-peptidylproline (omega=0). Involved in protein export. Acts as a chaperone by maintaining the newly synthesized protein in an open conformation. Functions as a peptidyl-prolyl cis-trans isomerase. The chain is Trigger factor from Maridesulfovibrio salexigens (strain ATCC 14822 / DSM 2638 / NCIMB 8403 / VKM B-1763) (Desulfovibrio salexigens).